A 159-amino-acid polypeptide reads, in one-letter code: Aspartate carbamoyltransferase regulatory chain (159 aa).

Residues cysteine 108, cysteine 113, cysteine 138, and cysteine 141 each contribute to the Zn(2+) site.

The protein belongs to the PyrI family. As to quaternary structure, contains catalytic and regulatory chains. It depends on Zn(2+) as a cofactor.

Its function is as follows. Involved in allosteric regulation of aspartate carbamoyltransferase. This Thermofilum pendens (strain DSM 2475 / Hrk 5) protein is Aspartate carbamoyltransferase regulatory chain.